We begin with the raw amino-acid sequence, 426 residues long: Glutamate-1-semialdehyde 2,1-aminomutase (426 aa).

An N6-(pyridoxal phosphate)lysine modification is found at Lys-265.

It belongs to the class-III pyridoxal-phosphate-dependent aminotransferase family. HemL subfamily. As to quaternary structure, homodimer. Requires pyridoxal 5'-phosphate as cofactor.

The protein resides in the cytoplasm. The catalysed reaction is (S)-4-amino-5-oxopentanoate = 5-aminolevulinate. Its pathway is porphyrin-containing compound metabolism; protoporphyrin-IX biosynthesis; 5-aminolevulinate from L-glutamyl-tRNA(Glu): step 2/2. The sequence is that of Glutamate-1-semialdehyde 2,1-aminomutase from Neisseria gonorrhoeae (strain NCCP11945).